The primary structure comprises 213 residues: Reticulon-3 (213 aa).

The segment covering 1 to 16 has biased composition (polar residues); that stretch reads MADTSGPQSSHISSSA. Residues 1 to 20 form a disordered region; the sequence is MADTSGPQSSHISSSAGEKG. The Reticulon domain occupies 25–213; that stretch reads VQDLLYWRDV…LPGALKKKSE (189 aa). 2 helical membrane-spanning segments follow: residues 45–65 and 154–174; these read MVLL…YLVL and VFNG…APIV.

As to quaternary structure, homodimer.

It is found in the endoplasmic reticulum membrane. The protein resides in the golgi apparatus membrane. May be involved in membrane trafficking in the early secretory pathway. The sequence is that of Reticulon-3 (rtn3) from Xenopus tropicalis (Western clawed frog).